The sequence spans 159 residues: Lipoprotein signal peptidase (159 aa).

Helical transmembrane passes span 64 to 84 and 89 to 109; these read SVQW…IWVV and PPFW…GNGI. Active-site residues include D119 and D135. The helical transmembrane segment at 130-150 threads the bilayer; it reads IFNPADIAINLAVLCFLVDLW.

This sequence belongs to the peptidase A8 family.

The protein localises to the cell inner membrane. The catalysed reaction is Release of signal peptides from bacterial membrane prolipoproteins. Hydrolyzes -Xaa-Yaa-Zaa-|-(S,diacylglyceryl)Cys-, in which Xaa is hydrophobic (preferably Leu), and Yaa (Ala or Ser) and Zaa (Gly or Ala) have small, neutral side chains.. The protein operates within protein modification; lipoprotein biosynthesis (signal peptide cleavage). This protein specifically catalyzes the removal of signal peptides from prolipoproteins. In Parasynechococcus marenigrum (strain WH8102), this protein is Lipoprotein signal peptidase.